Here is a 387-residue protein sequence, read N- to C-terminus: MATKKKTNFDDITKKYGAERDKALADALALIEKDFGKGSLMRLGEAANQKVSVVSSGSLALDIALGAGGYPKGRIVEIYGPESSGKTTVALHAVAAVQKEGGIAAFIDAENALDPEYAKALGVNIDELLLSQPDYGEQGLQIAEKLITSGAVDLVVIDSVAALVPKAEIDGEIGDSSVGLQARMMSQAMRKLAGHINKTKTTAIFINQLREKVGVMFGSPETTPGGRALKFYASVRLDVRGSTKIEEGSGDNKTQIGKITKIKVVKNKVAPPFKVALVDIMFGEGISSTGELLNIAVEEGIIKKSGAWFAYNDEKIGQGAEKAKNYLKEHQDVFDEIDHKVRAAHGLLDDSEVAETEEETTASKTKAKAKKEEKAVETEEIELELED.

Position 80 to 87 (80 to 87) interacts with ATP; that stretch reads GPESSGKT. A disordered region spans residues 348–387; sequence LDDSEVAETEEETTASKTKAKAKKEEKAVETEEIELELED. Composition is skewed to acidic residues over residues 349–360 and 378–387; these read DDSEVAETEEET and TEEIELELED.

Belongs to the RecA family.

Its subcellular location is the cytoplasm. Its function is as follows. Can catalyze the hydrolysis of ATP in the presence of single-stranded DNA, the ATP-dependent uptake of single-stranded DNA by duplex DNA, and the ATP-dependent hybridization of homologous single-stranded DNAs. It interacts with LexA causing its activation and leading to its autocatalytic cleavage. In Lactococcus lactis subsp. cremoris (strain MG1363), this protein is Protein RecA.